Consider the following 585-residue polypeptide: A-type ATP synthase subunit A (585 aa).

ATP is bound at residue 231 to 238; sequence GPFGSGKT.

Belongs to the ATPase alpha/beta chains family. Has multiple subunits with at least A(3), B(3), C, D, E, F, H, I and proteolipid K(x).

The protein localises to the cell membrane. It carries out the reaction ATP + H2O + 4 H(+)(in) = ADP + phosphate + 5 H(+)(out). In terms of biological role, produces ATP from ADP in the presence of a proton gradient across the membrane. The archaeal alpha chain is a catalytic subunit. Component of the A-type ATP synthase that produces ATP from ADP in the presence of a proton gradient across the membrane. The A chain is the catalytic subunit. In Thermococcus sp. (strain KI), this protein is A-type ATP synthase subunit A.